We begin with the raw amino-acid sequence, 288 residues long: Chitinase 5 (288 aa).

Residues 1–29 (MANSPTPTMLAFLALGLALLLSATGQASA) form the signal peptide. The region spanning 30–64 (QNCGCQSNMCCSKWGYCGTGKDYCGDGCRSGPCYG) is the Chitin-binding type-1 domain. 7 cysteine pairs are disulfide-bonded: Cys32-Cys40, Cys34-Cys46, Cys39-Cys53, Cys57-Cys62, Cys107-Cys156, Cys169-Cys178, and Cys256-Cys288. Glu151 serves as the catalytic Proton donor.

Belongs to the glycosyl hydrolase 19 family. Chitinase class IV subfamily. As to expression, expressed in sheaths and meristems and at lower levels in roots and leaves.

The enzyme catalyses Random endo-hydrolysis of N-acetyl-beta-D-glucosaminide (1-&gt;4)-beta-linkages in chitin and chitodextrins.. May function in reproductive organs during embryogenesis and seed maturation. This is Chitinase 5 (Cht5) from Oryza sativa subsp. japonica (Rice).